Reading from the N-terminus, the 330-residue chain is Beta-ketoacyl-[acyl-carrier-protein] synthase III (330 aa).

Residues C115 and H255 contribute to the active site. Residues 256-260 (QANVR) form an ACP-binding region. N285 is an active-site residue.

Belongs to the thiolase-like superfamily. FabH family. As to quaternary structure, homodimer.

The protein resides in the cytoplasm. The enzyme catalyses malonyl-[ACP] + acetyl-CoA + H(+) = 3-oxobutanoyl-[ACP] + CO2 + CoA. The protein operates within lipid metabolism; fatty acid biosynthesis. In terms of biological role, catalyzes the condensation reaction of fatty acid synthesis by the addition to an acyl acceptor of two carbons from malonyl-ACP. Catalyzes the first condensation reaction which initiates fatty acid synthesis and may therefore play a role in governing the total rate of fatty acid production. Possesses both acetoacetyl-ACP synthase and acetyl transacylase activities. Its substrate specificity determines the biosynthesis of branched-chain and/or straight-chain of fatty acids. The polypeptide is Beta-ketoacyl-[acyl-carrier-protein] synthase III (Symbiobacterium thermophilum (strain DSM 24528 / JCM 14929 / IAM 14863 / T)).